A 1058-amino-acid polypeptide reads, in one-letter code: Receptor-type guanylate cyclase gcy-22 (1058 aa).

A signal peptide spans 1-23; the sequence is MSFISKCFICLLFSTYFLPPVNS. Residues 25–470 are Extracellular-facing; sequence VLQVGFLAAN…PKSFTDQYLA (446 aa). Asn36, Asn73, Asn201, Asn215, Asn277, Asn302, Asn324, Asn350, and Asn386 each carry an N-linked (GlcNAc...) asparagine glycan. Residues 471-491 form a helical membrane-spanning segment; sequence IILGCTAAALVLIIAVISTIV. At 492–1058 the chain is on the cytoplasmic side; the sequence is FLVRSKRQEE…IEAKENGESI (567 aa). Positions 501–809 constitute a Protein kinase domain; the sequence is EERLNQLWQV…SSNLMDHVFN (309 aa). Residues 811 to 840 are a coiled coil; the sequence is LEQYASNLEDEVQARMKELTEEKKRSDVLL. The Guanylate cyclase domain occupies 867-997; sequence TIFFSDVVSF…DSVNTASRME (131 aa).

It belongs to the adenylyl cyclase class-4/guanylyl cyclase family. As to expression, expression in ASER neuron begins at an early larval stage and is maintained in the adult.

It localises to the cell membrane. The catalysed reaction is GTP = 3',5'-cyclic GMP + diphosphate. Its function is as follows. Guanylate cyclase involved in the production of the second messenger cGMP. Regulates chemotaxis responses toward Li(1-), Mg(2+), Cl(1-), Br(1)- and I(1-) salt ions and methionine in ASE right (ASER) sensory neuron. May regulate ASER neuronal activity such as axon sprouting and calcium responses to changes in salt concentrations. The chain is Receptor-type guanylate cyclase gcy-22 from Caenorhabditis elegans.